The following is a 294-amino-acid chain: UPF0761 membrane protein YPTS_0028 (294 aa).

7 helical membrane passes run 44–64, 67–87, 108–128, 136–156, 185–205, 212–232, and 246–266; these read LLSL…FPMF, ISIK…GDII, GLIV…NIIW, LVFS…LVGA, VFPL…VPTV, ALIG…GFAM, and VLAV…IVLL.

Belongs to the UPF0761 family.

It is found in the cell inner membrane. This Yersinia pseudotuberculosis serotype IB (strain PB1/+) protein is UPF0761 membrane protein YPTS_0028.